A 321-amino-acid chain; its full sequence is Olfactory receptor 52N2 (321 aa).

Topologically, residues 1–27 (MSGDNSSSLTPGFFILNGVPGLEATHI) are extracellular. Asn5 carries N-linked (GlcNAc...) asparagine glycosylation. The helical transmembrane segment at 28–48 (WISLPFCFMYIIAVVGNCGLI) threads the bilayer. Over 49 to 56 (CLISHEEA) the chain is Cytoplasmic. A helical transmembrane segment spans residues 57-77 (LHRPMYYFLALLSFTDVTLCT). The Extracellular portion of the chain corresponds to 78 to 101 (TMVPNMLCIFWFNLKEIDFNACLA). Cysteines 99 and 191 form a disulfide. A helical membrane pass occupies residues 102-122 (QMFFVHMLTGMESGVLMLMAL). Topologically, residues 123-141 (DRYVAICYPLRYATILTNP) are cytoplasmic. A helical transmembrane segment spans residues 142–162 (VIAKAGLATFLRNVMLIIPFT). Over 163-198 (LLTKRLPYCRGNFIPHTYCDHMSVAKVSCGNFKVNA) the chain is Extracellular. Residues 199–219 (IYGLMVALLIGVFDICCISVS) form a helical membrane-spanning segment. The Cytoplasmic segment spans residues 220-239 (YTMILQAVMSLSSADARHKA). Residues 240–260 (FSTCTSHMCSIVITYVAAFFT) traverse the membrane as a helical segment. Residues 261–276 (FFTHRFVGHNIPNHIH) lie on the Extracellular side of the membrane. The chain crosses the membrane as a helical span at residues 277–297 (IIVANLYLLLPPTMNPIVYGV). Over 298–321 (KTKQIQEGVIKFLLGDKVSFTYDK) the chain is Cytoplasmic.

It belongs to the G-protein coupled receptor 1 family.

Its subcellular location is the cell membrane. In terms of biological role, odorant receptor. This chain is Olfactory receptor 52N2 (OR52N2), found in Homo sapiens (Human).